The sequence spans 419 residues: Hyaluronan synthase (419 aa).

A run of 5 helical transmembrane segments spans residues 8 to 28 (LIVL…MYLF), 33 to 53 (VGIY…LSFL), 318 to 338 (IVAL…VAIG), 345 to 365 (AIQL…IVAL), and 376 to 396 (PASF…LQPL).

This sequence belongs to the NodC/HAS family. Requires Mg(2+) as cofactor.

Its subcellular location is the cell membrane. It catalyses the reaction [hyaluronan](n) + UDP-N-acetyl-alpha-D-glucosamine = N-acetyl-beta-D-glucosaminyl-(1-&gt;4)-[hyaluronan](n) + UDP + H(+). The enzyme catalyses N-acetyl-beta-D-glucosaminyl-(1-&gt;4)-[hyaluronan](n) + UDP-alpha-D-glucuronate = [hyaluronan](n+1) + UDP + H(+). It participates in glycan biosynthesis; hyaluronan biosynthesis. Functionally, glycosaminoglycan synthesis. The hyaluronic acid capsule is involved in the pathogenicity of group A Streptococci; it may be the major virulence determinant. In Streptococcus pyogenes serotype M1, this protein is Hyaluronan synthase (hasA).